The primary structure comprises 173 residues: Glutamyl-tRNA(Gln) amidotransferase subunit C, mitochondrial (173 aa).

This sequence belongs to the GatC family. In terms of assembly, subunit of the heterotrimeric GatCAB amidotransferase (AdT) complex, composed of A, B and C subunits.

Its subcellular location is the mitochondrion. It catalyses the reaction L-glutamyl-tRNA(Gln) + L-glutamine + ATP + H2O = L-glutaminyl-tRNA(Gln) + L-glutamate + ADP + phosphate + H(+). Functionally, allows the formation of correctly charged Gln-tRNA(Gln) through the transamidation of misacylated Glu-tRNA(Gln) in the mitochondria. The reaction takes place in the presence of glutamine and ATP through an activated gamma-phospho-Glu-tRNA(Gln). The chain is Glutamyl-tRNA(Gln) amidotransferase subunit C, mitochondrial from Drosophila persimilis (Fruit fly).